Consider the following 245-residue polypeptide: uncharacterized protein (245 aa).

This is an uncharacterized protein from Escherichia coli.